We begin with the raw amino-acid sequence, 736 residues long: Myotubularin-related protein 12 (736 aa).

The region spanning 182–558 (YLRSTNPEML…RQLSLPSSAF (377 aa)) is the Myotubularin phosphatase domain. Residues 672–691 (SLATQPDHPPPLHHRLPSFG) form a disordered region.

The protein belongs to the protein-tyrosine phosphatase family. Non-receptor class myotubularin subfamily. In terms of assembly, heterodimer with lipid phosphatase mtm1. In skeletal muscles, the interaction stabilizes both mtmr12 and mtm1 protein levels.

It is found in the cytoplasm. Its subcellular location is the sarcoplasmic reticulum. The protein resides in the myofibril. The protein localises to the sarcomere. Functionally, acts as an adapter for the myotubularin phosphatase mtm1 to regulate mtm1 protein stability and possibly its intracellular location. By stabilizing mtm1 protein levels, required for skeletal muscle maintenance but not for myogenesis. In skeletal muscle cells, does not regulate mtm1 subcellular localization. The protein is Myotubularin-related protein 12 (mtmr12) of Danio rerio (Zebrafish).